Consider the following 374-residue polypeptide: 4-galactosyl-N-acetylglucosaminide 3-alpha-L-fucosyltransferase FUT5 (374 aa).

The Cytoplasmic portion of the chain corresponds to M1–R15. A helical; Signal-anchor for type II membrane protein membrane pass occupies residues C16–L34. Residues R35 to N374 are Lumenal-facing. N-linked (GlcNAc...) asparagine glycosylation is found at N60, N105, N167, and N198.

Belongs to the glycosyltransferase 10 family.

It is found in the golgi apparatus. Its subcellular location is the golgi stack membrane. The catalysed reaction is a beta-D-galactosyl-(1-&gt;3)-N-acetyl-beta-D-glucosaminyl derivative + GDP-beta-L-fucose = a beta-D-galactosyl-(1-&gt;3)-[alpha-L-fucosyl-(1-&gt;4)]-N-acetyl-beta-D-glucosaminyl derivative + GDP + H(+). The enzyme catalyses an N-acetyl-alpha-neuraminyl-(2-&gt;3)-beta-D-galactosyl-(1-&gt;4)-N-acetyl-beta-D-glucosaminyl derivative + GDP-beta-L-fucose = an alpha-Neu5Ac-(2-&gt;3)-beta-D-Gal-(1-&gt;4)-[alpha-L-Fuc-(1-&gt;3)]-beta-D-GlcNAc derivative + GDP + H(+). It carries out the reaction an alpha-Neu5Ac-(2-&gt;3)-beta-D-Gal-(1-&gt;4)-beta-D-GlcNAc-(1-&gt;3)-beta-D-Gal-(1-&gt;4)-[alpha-L-Fuc-(1-&gt;3)]-beta-D-GlcNAc derivative + GDP-beta-L-fucose = an alpha-Neu5Ac-(2-&gt;3)-beta-D-Gal-(1-&gt;4)-[alpha-L-Fuc-(1-&gt;3)]-beta-D-GlcNAc-(1-&gt;3)-beta-D-Gal-(1-&gt;4)-[alpha-L-Fuc-(1-&gt;3)]-beta-D-GlcNAc derivative + GDP + H(+). It catalyses the reaction a beta-D-galactosyl-(1-&gt;4)-N-acetyl-beta-D-glucosaminyl derivative + GDP-beta-L-fucose = a beta-D-galactosyl-(1-&gt;4)-[alpha-L-fucosyl-(1-&gt;3)]-N-acetyl-beta-D-glucosaminyl derivative + GDP + H(+). The catalysed reaction is a neolactoside nLc4Cer + GDP-beta-L-fucose = a neolactoside III(3)-alpha-Fuc-nLc4Cer + GDP + H(+). The enzyme catalyses a neolactoside nLc6Cer + GDP-beta-L-fucose = beta-D-galactosyl-(1-&gt;4)-N-acetyl-beta-D-glucosaminyl-(1-&gt;3)-beta-D-galactosyl-(1-&gt;4)-[alpha-L-fucosyl-(1-&gt;3)]-N-acetyl-beta-D-glucosaminyl-(1-&gt;3)-beta-D-galactosyl-(1-&gt;4)-beta-D-glucosyl-(1&lt;-&gt;1')-ceramide + GDP + H(+). It carries out the reaction a neolactoside nLc6Cer(d18:1(4E)) + GDP-beta-L-fucose = a neolactoside III(3)-alpha-Fuc-nLc6Cer(d18:1(4E)) + GDP + H(+). It catalyses the reaction a neolactoside nLc4Cer(d18:1(4E)) + GDP-beta-L-fucose = a neolactoside III(3)-alpha-Fuc-nLc4Cer(d18:1(4E)) + GDP + H(+). The catalysed reaction is a neolactoside VI(3)-alpha-NeuNAc-nLc6Cer + GDP-beta-L-fucose = a neolactoside VI(3)-alpha-NeuAc,III(3)-alphaFuc-nLc6Cer + GDP + H(+). The enzyme catalyses beta-D-galactosyl-(1-&gt;4)-N-acetyl-D-glucosamine + GDP-beta-L-fucose = beta-D-galactosyl-(1-&gt;4)-[alpha-L-fucosyl-(1-&gt;3)]-N-acetyl-D-glucosamine + GDP + H(+). It carries out the reaction N-acetyl-alpha-neuraminosyl-(2-&gt;3)-beta-D-galactosyl-(1-&gt;4)-N-acetyl-beta-D-glucosamine + GDP-beta-L-fucose = N-acetyl-alpha-neuraminosyl-(2-&gt;3)-beta-D-galactosyl-(1-&gt;4)-[alpha-L-fucosyl-(1-&gt;3)]-N-acetyl-beta-D-glucosamine + GDP + H(+). It catalyses the reaction alpha-L-Fuc-(1-&gt;2)-beta-D-Gal-(1-&gt;4)-D-GlcNAc + GDP-beta-L-fucose = alpha-L-Fuc-(1-&gt;2)-beta-D-Gal-(1-&gt;4)-[alpha-L-Fuc-(1-&gt;3)]-D-GlcNAc + GDP + H(+). The catalysed reaction is an alpha-Neu5Ac-(2-&gt;3)-beta-D-Gal-(1-&gt;3)-D-GlcNAc derivative + GDP-beta-L-fucose = an alpha-Neu5Ac-(2-&gt;3)-beta-D-Gal-(1-&gt;3)-[alpha-L-Fuc-(1-&gt;4)]-beta-D-GlcNAc derivative + GDP + H(+). It functions in the pathway protein modification; protein glycosylation. Catalyzes preferentially the transfer of L-fucose, from a guanosine diphosphate-beta-L-fucose, to the N-acetyl-beta-D-glucosamine (GlcNAc) of an N-acetyllactosamine unit (type 2 chain) of an oligosaccharide, or a glycoprotein- and a glycolipid-linked N-acetyllactosamine unit via an alpha (1,3) linkage and participates in the surface expression of VIM-2, Lewis X/SSEA-1 and sialyl Lewis X antigens. Preferentially transfers fucose to the GlcNAc of an internal N-acetyllactosamine unit of a poly-N-acetyllactosamine chain acceptor substrate. Also catalyzes to a lesser extend the transfer of L-fucose to the GlcNAc of a type 1 (beta-D-galactosyl-(1-&gt;3)-N-acetyl-beta-D-glucosaminyl) or H-type 1 (alpha-L-Fuc-(1-&gt;2)-beta-D-Gal-(1-&gt;3)-D-GlcNAc) chain oligosaccharide via an alpha (1,4) linkage. Preferentially catalyzes sialylated type 2 oligosaccharide acceptors over neutral type 2 or H type 2 (alpha-L-Fuc-(1-&gt;2)-beta-D-Gal-(1-&gt;4)-D-GlcNAc) oligosaccharide acceptors. Lactose-based structures are also acceptor substrates. In Hylobates lar (Lar gibbon), this protein is 4-galactosyl-N-acetylglucosaminide 3-alpha-L-fucosyltransferase FUT5.